The primary structure comprises 381 residues: MNLNFMPLLHAYNHASIDFHFNSSARDFCVHEVPLYEFSNKGEHAIIQVRKSGLSTLEMLQIFSQILGVKIAELGYAGLKDKNALTTQFVSLPKKYAPLLEKNTSNFQERNLKILSLNYHHNKIKLGHLKGNRFFMRFKKMTPLNAHKTKQVLEQIVQFGMPNYFGSQRFGKFNDNHKEGLKILQNEAKFKNQKLNAFLISSYQSYLFNSLLSKRLEISKIISDFSLKEGLEFFKQKNLNIHSNALKALKNQDHPFKILEGDVMCHYPYGKFFDALELEKESERFLKKEAVPMGLLDGKKALYAKNLSLEIEKEFQNHILSDHAKTLGSRRFFWVFVENLTSKYIKEKVQFELEFYLPKGSYASALLKEIKHQKGENNDEF.

Residue aspartate 81 is the Nucleophile of the active site. In terms of domain architecture, TRUD spans 160–335 (GMPNYFGSQR…TLGSRRFFWV (176 aa)).

Belongs to the pseudouridine synthase TruD family.

The catalysed reaction is uridine(13) in tRNA = pseudouridine(13) in tRNA. Functionally, responsible for synthesis of pseudouridine from uracil-13 in transfer RNAs. The chain is tRNA pseudouridine synthase D from Helicobacter acinonychis (strain Sheeba).